A 681-amino-acid polypeptide reads, in one-letter code: tRNA wybutosine-synthesizing protein 4 (681 aa).

A compositionally biased stretch (basic residues) spans 1-11 (MSNKNQRKTKS). The disordered stretch occupies residues 1–21 (MSNKNQRKTKSKDREVRKTND). Residues R66, G92, D119, 165–166 (NL), and E193 each bind S-adenosyl-L-methionine.

This sequence belongs to the methyltransferase superfamily. LCMT family.

The enzyme catalyses 7-[(3S)-3-amino-3-carboxypropyl]wyosine(37) in tRNA(Phe) + S-adenosyl-L-methionine = 7-[(3S)-(3-amino-3-methoxycarbonyl)propyl]wyosine(37) in tRNA(Phe) + S-adenosyl-L-homocysteine. It carries out the reaction 7-[(3S)-(3-amino-3-methoxycarbonyl)propyl]wyosine(37) in tRNA(Phe) + S-adenosyl-L-methionine + CO2 = wybutosine(37) in tRNA(Phe) + S-adenosyl-L-homocysteine + 2 H(+). Its pathway is tRNA modification; wybutosine-tRNA(Phe) biosynthesis. Probable S-adenosyl-L-methionine-dependent methyltransferase that acts as a component of the wybutosine biosynthesis pathway. Wybutosine is a hyper modified guanosine with a tricyclic base found at the 3'-position adjacent to the anticodon of eukaryotic phenylalanine tRNA. May methylate the carboxyl group of leucine residues to form alpha-leucine ester residues. This chain is tRNA wybutosine-synthesizing protein 4 (ppm2), found in Schizosaccharomyces pombe (strain 972 / ATCC 24843) (Fission yeast).